The following is a 315-amino-acid chain: Acetyl-coenzyme A carboxylase carboxyl transferase subunit alpha (315 aa).

Residues 36 to 289 enclose the CoA carboxyltransferase C-terminal domain; the sequence is LSKKRLELME…RKAVAAELKI (254 aa).

Belongs to the AccA family. As to quaternary structure, acetyl-CoA carboxylase is a heterohexamer composed of biotin carboxyl carrier protein (AccB), biotin carboxylase (AccC) and two subunits each of ACCase subunit alpha (AccA) and ACCase subunit beta (AccD).

It localises to the cytoplasm. It catalyses the reaction N(6)-carboxybiotinyl-L-lysyl-[protein] + acetyl-CoA = N(6)-biotinyl-L-lysyl-[protein] + malonyl-CoA. Its pathway is lipid metabolism; malonyl-CoA biosynthesis; malonyl-CoA from acetyl-CoA: step 1/1. In terms of biological role, component of the acetyl coenzyme A carboxylase (ACC) complex. First, biotin carboxylase catalyzes the carboxylation of biotin on its carrier protein (BCCP) and then the CO(2) group is transferred by the carboxyltransferase to acetyl-CoA to form malonyl-CoA. This chain is Acetyl-coenzyme A carboxylase carboxyl transferase subunit alpha, found in Francisella tularensis subsp. tularensis (strain FSC 198).